The following is a 189-amino-acid chain: Endoribonuclease YbeY (189 aa).

Positions 146, 150, and 156 each coordinate Zn(2+).

This sequence belongs to the endoribonuclease YbeY family. It depends on Zn(2+) as a cofactor.

Its subcellular location is the cytoplasm. In terms of biological role, single strand-specific metallo-endoribonuclease involved in late-stage 70S ribosome quality control and in maturation of the 3' terminus of the 16S rRNA. This chain is Endoribonuclease YbeY, found in Prochlorococcus marinus (strain MIT 9211).